The sequence spans 328 residues: uncharacterized protein (328 aa).

The region spanning R3–G126 is the Bro-N domain.

This is an uncharacterized protein from Autographa californica nuclear polyhedrosis virus (AcMNPV).